Here is a 743-residue protein sequence, read N- to C-terminus: Catalase-peroxidase (743 aa).

The segment at 1–22 is disordered; sequence MEKQSNDAAVAGAPNDHGAAKC. A cross-link (tryptophyl-tyrosyl-methioninium (Trp-Tyr) (with M-253)) is located at residues 105-227; the sequence is WHSAGTYRIT…LGAVQMGLIY (123 aa). Histidine 106 functions as the Proton acceptor in the catalytic mechanism. The tryptophyl-tyrosyl-methioninium (Tyr-Met) (with W-105) cross-link spans 227-253; the sequence is YVNPEGPNGNPDPVAAAKDIRETFFRM. Histidine 268 provides a ligand contact to heme b.

Belongs to the peroxidase family. Peroxidase/catalase subfamily. Homodimer or homotetramer. The cofactor is heme b. In terms of processing, formation of the three residue Trp-Tyr-Met cross-link is important for the catalase, but not the peroxidase activity of the enzyme.

It catalyses the reaction H2O2 + AH2 = A + 2 H2O. The catalysed reaction is 2 H2O2 = O2 + 2 H2O. Bifunctional enzyme with both catalase and broad-spectrum peroxidase activity. This is Catalase-peroxidase from Solibacter usitatus (strain Ellin6076).